We begin with the raw amino-acid sequence, 475 residues long: ATP synthase subunit beta (475 aa).

152–159 (GGAGVGKT) is a binding site for ATP.

It belongs to the ATPase alpha/beta chains family. As to quaternary structure, F-type ATPases have 2 components, CF(1) - the catalytic core - and CF(0) - the membrane proton channel. CF(1) has five subunits: alpha(3), beta(3), gamma(1), delta(1), epsilon(1). CF(0) has three main subunits: a(1), b(2) and c(9-12). The alpha and beta chains form an alternating ring which encloses part of the gamma chain. CF(1) is attached to CF(0) by a central stalk formed by the gamma and epsilon chains, while a peripheral stalk is formed by the delta and b chains.

It localises to the cell membrane. It catalyses the reaction ATP + H2O + 4 H(+)(in) = ADP + phosphate + 5 H(+)(out). In terms of biological role, produces ATP from ADP in the presence of a proton gradient across the membrane. The catalytic sites are hosted primarily by the beta subunits. The polypeptide is ATP synthase subunit beta (Wolbachia pipientis wMel).